Here is a 276-residue protein sequence, read N- to C-terminus: Diaminopimelate epimerase (276 aa).

Substrate-binding residues include Asn13, Gln46, and Asn66. Residue Cys75 is the Proton donor of the active site. Substrate-binding positions include 76–77 (GN), Asn159, Asn192, and 210–211 (ER). Cys219 acts as the Proton acceptor in catalysis. A substrate-binding site is contributed by 220 to 221 (GS).

This sequence belongs to the diaminopimelate epimerase family. In terms of assembly, homodimer.

It is found in the cytoplasm. The enzyme catalyses (2S,6S)-2,6-diaminopimelate = meso-2,6-diaminopimelate. It functions in the pathway amino-acid biosynthesis; L-lysine biosynthesis via DAP pathway; DL-2,6-diaminopimelate from LL-2,6-diaminopimelate: step 1/1. Catalyzes the stereoinversion of LL-2,6-diaminopimelate (L,L-DAP) to meso-diaminopimelate (meso-DAP), a precursor of L-lysine and an essential component of the bacterial peptidoglycan. This chain is Diaminopimelate epimerase, found in Aliivibrio fischeri (strain ATCC 700601 / ES114) (Vibrio fischeri).